A 588-amino-acid polypeptide reads, in one-letter code: MLHLHHSWLCFRSWLAGMLSVLLGLVPSASSNISTSRPNILLLMADDLGIGDIGCYGNNTMRTPNIDRLAEDGVKLTQHISAASLCTPSRAAFLTGRYPVRSGMVSSIGYRVLQWTGASGGLPTNETTFAKILKEKGYATGLIGKWHLGLNCESASDHCHHPLHHGFDHFYGMPFSLMGDCAHWELSEKRVNLEQKLNFLFQVLALVALTLVAGKLTHLIPVSWTPVIWSALWAVLLLTGSYFVGALIVHAGCLLMRNHTITEQPMRFQKTTPLILQEVASFLKRNKHGPFLLFVSFLHVHIPLITMENFLGKSLHGLYGDNVEEMDWMVGQILDTLDMEGLTNSTLIYFTSDHGGSLENQLGRTQYGGWNGIYKGGKGMGGWEGGIRVPGIFRWPGVLPAGQVIGEPTSLMDVFPTVVQLAGGEVPQDRVIDGQDLLPLLLGTAQHSDHEFLMHYCEGFLHAARWHQRDRTTWKVHFVTPVFQPEGAGACYGRKVCPCFGEKVLHHDPPLLFDLSRDPSETHVLTPASEPVFYQVMERVQRAVREHQRTLSPVPLQLDRLGNIWRPWLQPSCGPFPLCWCLREDGPQ.

The signal sequence occupies residues 1 to 31 (MLHLHHSWLCFRSWLAGMLSVLLGLVPSASS). An N-linked (GlcNAc...) asparagine glycan is attached at Asn32. Positions 46 and 47 each coordinate Ca(2+). Asn58 is a glycosylation site (N-linked (GlcNAc...) asparagine). Cys86 contacts Ca(2+). Cys86 (nucleophile) is an active-site residue. Cys86 bears the 3-oxoalanine (Cys) mark. Asn125 carries an N-linked (GlcNAc...) asparagine glycan. Lys145 provides a ligand contact to substrate. His147 is an active-site residue. An N-linked (GlcNAc...) asparagine glycan is attached at Asn258. His301 provides a ligand contact to substrate. An N-linked (GlcNAc...) asparagine glycan is attached at Asn344. Positions 353 and 354 each coordinate Ca(2+). Lys378 is a binding site for substrate.

It belongs to the sulfatase family. It depends on Ca(2+) as a cofactor. Post-translationally, the conversion to 3-oxoalanine (also known as C-formylglycine, FGly), of a serine or cysteine residue in prokaryotes and of a cysteine residue in eukaryotes, is critical for catalytic activity.

Its subcellular location is the golgi apparatus. The protein localises to the golgi stack. It carries out the reaction an aryl sulfate + H2O = a phenol + sulfate + H(+). Its function is as follows. Exhibits arylsulfatase activity towards the artificial substrate 4-methylumbelliferyl sulfate. May be essential for the correct composition of cartilage and bone matrix during development. Has no activity toward steroid sulfates. The sequence is that of Arylsulfatase L (ARSL) from Macaca fascicularis (Crab-eating macaque).